Here is a 310-residue protein sequence, read N- to C-terminus: uncharacterized protein (310 aa).

This is an uncharacterized protein from Archaeoglobus fulgidus (strain ATCC 49558 / DSM 4304 / JCM 9628 / NBRC 100126 / VC-16).